Reading from the N-terminus, the 451-residue chain is Chromosomal replication initiator protein DnaA (451 aa).

A domain I, interacts with DnaA modulators region spans residues 1-93 (MENIDDLWNK…HNQEEEALPE (93 aa)). Residues 88 to 108 (EEALPEQTPQTPPEKDVAGQS) are disordered. Positions 94–113 (QTPQTPPEKDVAGQSTLSQT) are domain II. The segment at 114-330 (MLNDKYTFNT…GALIRVVAYS (217 aa)) is domain III, AAA+ region. Gly158, Gly160, Lys161, and Thr162 together coordinate ATP. Residues 331–451 (SLINQDMNAD…VQAITEQLRQ (121 aa)) form a domain IV, binds dsDNA region.

This sequence belongs to the DnaA family. Oligomerizes as a right-handed, spiral filament on DNA at oriC.

It localises to the cytoplasm. Functionally, plays an essential role in the initiation and regulation of chromosomal replication. ATP-DnaA binds to the origin of replication (oriC) to initiate formation of the DNA replication initiation complex once per cell cycle. Binds the DnaA box (a 9 base pair repeat at the origin) and separates the double-stranded (ds)DNA. Forms a right-handed helical filament on oriC DNA; dsDNA binds to the exterior of the filament while single-stranded (ss)DNA is stabiized in the filament's interior. The ATP-DnaA-oriC complex binds and stabilizes one strand of the AT-rich DNA unwinding element (DUE), permitting loading of DNA polymerase. After initiation quickly degrades to an ADP-DnaA complex that is not apt for DNA replication. Binds acidic phospholipids. The polypeptide is Chromosomal replication initiator protein DnaA (Shouchella clausii (strain KSM-K16) (Alkalihalobacillus clausii)).